Here is a 303-residue protein sequence, read N- to C-terminus: MIEELAGIDIRINEPLKKYTYTKVGGPADYLVFPRNRLELTRVVKYANNHSIPWIVLGNASNLIVRDGGIRGFVIMFNKLNTVTVDGYTIEAEAGANLIETTKVAKFHSLTGFEFACGIPGSVGGAIFMNAGAYGGEIANIFLSAKVLTPEGDIKTMTAREMAFGYRHSAIQKSGDIVISAKFALKPGDFEQISQEMNRLNYLRQLKQPLEYPSCGSVFKRPEGHFAGQLIMEAKLKGYRIGGVEVSEKHAGFMINVDHGTAKDYEHLIAHVIETVEHNSGIRLEREVRIIGEQESLNQKEKS.

The 166-residue stretch at 23–188 (KVGGPADYLV…ISAKFALKPG (166 aa)) folds into the FAD-binding PCMH-type domain. Residue R167 is part of the active site. Catalysis depends on S217, which acts as the Proton donor. The active site involves E287.

The protein belongs to the MurB family. It depends on FAD as a cofactor.

It localises to the cytoplasm. The enzyme catalyses UDP-N-acetyl-alpha-D-muramate + NADP(+) = UDP-N-acetyl-3-O-(1-carboxyvinyl)-alpha-D-glucosamine + NADPH + H(+). The protein operates within cell wall biogenesis; peptidoglycan biosynthesis. Cell wall formation. This chain is UDP-N-acetylenolpyruvoylglucosamine reductase, found in Streptococcus uberis (strain ATCC BAA-854 / 0140J).